Consider the following 389-residue polypeptide: Anhydro-N-acetylmuramic acid kinase (389 aa).

Position 11–18 (11–18) interacts with ATP; that stretch reads GTSLDGVD.

It belongs to the anhydro-N-acetylmuramic acid kinase family.

The catalysed reaction is 1,6-anhydro-N-acetyl-beta-muramate + ATP + H2O = N-acetyl-D-muramate 6-phosphate + ADP + H(+). It functions in the pathway amino-sugar metabolism; 1,6-anhydro-N-acetylmuramate degradation. Its pathway is cell wall biogenesis; peptidoglycan recycling. Catalyzes the specific phosphorylation of 1,6-anhydro-N-acetylmuramic acid (anhMurNAc) with the simultaneous cleavage of the 1,6-anhydro ring, generating MurNAc-6-P. Is required for the utilization of anhMurNAc either imported from the medium or derived from its own cell wall murein, and thus plays a role in cell wall recycling. The protein is Anhydro-N-acetylmuramic acid kinase of Albidiferax ferrireducens (strain ATCC BAA-621 / DSM 15236 / T118) (Rhodoferax ferrireducens).